We begin with the raw amino-acid sequence, 316 residues long: Beta-ketoacyl-[acyl-carrier-protein] synthase III (316 aa).

Residues Cys-112 and His-243 contribute to the active site. The ACP-binding stretch occupies residues 244–248; the sequence is QANLR. Asn-273 is a catalytic residue.

It belongs to the thiolase-like superfamily. FabH family. In terms of assembly, homodimer.

The protein resides in the cytoplasm. The enzyme catalyses malonyl-[ACP] + acetyl-CoA + H(+) = 3-oxobutanoyl-[ACP] + CO2 + CoA. The protein operates within lipid metabolism; fatty acid biosynthesis. In terms of biological role, catalyzes the condensation reaction of fatty acid synthesis by the addition to an acyl acceptor of two carbons from malonyl-ACP. Catalyzes the first condensation reaction which initiates fatty acid synthesis and may therefore play a role in governing the total rate of fatty acid production. Possesses both acetoacetyl-ACP synthase and acetyl transacylase activities. Its substrate specificity determines the biosynthesis of branched-chain and/or straight-chain of fatty acids. The protein is Beta-ketoacyl-[acyl-carrier-protein] synthase III of Histophilus somni (strain 129Pt) (Haemophilus somnus).